Reading from the N-terminus, the 654-residue chain is Amyloid beta precursor like protein 1 (654 aa).

The N-terminal stretch at 1–38 (MGPTSPAARGQGRRWRPPPLPLLLPLSLLLLRAQLAVG) is a signal peptide. The Extracellular portion of the chain corresponds to 39–584 (NLAVGSPSAA…APSGTGVSRE (546 aa)). The GFLD subdomain stretch occupies residues 50–146 (APGSAQVAGL…PFHCLPGEFV (97 aa)). Residues 50–212 (APGSAQVAGL…RGVEYVCCPP (163 aa)) enclose the E1 domain. Cystine bridges form between Cys60/Cys84, Cys95/Cys140, Cys120/Cys128, Cys156/Cys210, Cys167/Cys197, and Cys181/Cys209. Residues 154-212 (EGCRFLHQERMDQCESSTRRHQEAQEACSSQGLILHGSGMLLPCGSDRFRGVEYVCCPP) are cuBD subdomain. Cu(2+) is bound at residue His174. Zn(2+) contacts are provided by Glu206, Cys209, and Cys210. The segment at 214-297 (ATPNPSGMAA…VTPTPRPTDG (84 aa)) is disordered. The span at 262–272 (QAEEEEEEEEE) shows a compositional bias: acidic residues. The 192-residue stretch at 297-488 (GVDVYFGMPG…QELRPQIQEL (192 aa)) folds into the E2 domain. 2 heparin-binding regions span residues 314–346 (FLRA…SKNL) and 414–445 (LMAL…DPEK). The segment at 446–463 (AQQMRFQVQTHLQVIEER) is collagen-binding. An N-linked (GlcNAc...) asparagine glycan is attached at Asn465. The disordered stretch occupies residues 497 to 580 (SELDASVPGS…RDELAPSGTG (84 aa)). Basic and acidic residues predominate over residues 508 to 523 (SEDKGSLQPPESKDDP). Polar residues predominate over residues 529–539 (KGSTDQESSSS). N-linked (GlcNAc...) asparagine glycosylation is present at Asn555. A Cu(2+)-binding site is contributed by His565. Residue His565 participates in Zn(2+) binding. Residues 585-607 (ALSGLLIMGAGGGSLIVLSLLLL) traverse the membrane as a helical segment. The short motif at 608-619 (RKKKPYGTISHG) is the Basolateral sorting signal element. Residues 608 to 654 (RKKKPYGTISHGVVEVDPMLTLEEQQLRELQRHGYENPTYRFLEERP) are Cytoplasmic-facing. An interaction with DAB1 region spans residues 636-652 (ELQRHGYENPTYRFLEE). The segment at 640–654 (HGYENPTYRFLEERP) is interaction with DAB2. The NPXY motif; contains endocytosis signal motif lies at 644–647 (NPTY).

The protein belongs to the APP family. Monomer and homodimer. Heparin binding promotes homodimerization. Binds, via its C-terminus, to the PID domain of several cytoplasmic proteins, including APBB and APBA family members, MAPK8IP1 and DAB1. Binding to Dab1 inhibits its serine phosphorylation. Interacts with CPEB1. Interacts (via NPXY motif) with DAB2 (via PID domain); the interaction is impaired by tyrosine phosphorylation of the NPXY motif. Interacts (via NPXY motif) with DAB1. Post-translationally, proteolytically cleaved by caspases during neuronal apoptosis. Cleaved, in vitro, at Asp-624 by caspase-3. N- and O-glycosylated.

It localises to the cell membrane. Its subcellular location is the cytoplasm. Its function is as follows. May play a role in postsynaptic function. The C-terminal gamma-secretase processed fragment, ALID1, activates transcription activation through APBB1 (Fe65) binding. Couples to JIP signal transduction through C-terminal binding. May interact with cellular G-protein signaling pathways. Can regulate neurite outgrowth through binding to components of the extracellular matrix such as heparin and collagen I. Functionally, the gamma-CTF peptide, C30, is a potent enhancer of neuronal apoptosis. The chain is Amyloid beta precursor like protein 1 (Aplp1) from Mus musculus (Mouse).